The chain runs to 205 residues: HTH-type transcriptional regulator LuxR (205 aa).

Positions 15-75 constitute an HTH tetR-type domain; it reads LKRKQQLMEI…EVLNHVVRQF (61 aa). The H-T-H motif DNA-binding region spans 39–58; that stretch reads HADIAEIAQVSVATVFNYFP.

In terms of biological role, regulatory protein of bacterial bioluminescence. It probably binds the autoinducer molecule and potentiates the transcription of the bioluminescence operon. The chain is HTH-type transcriptional regulator LuxR (luxR) from Vibrio harveyi (Beneckea harveyi).